We begin with the raw amino-acid sequence, 228 residues long: MRIKSMAKSELPRERLIHNGAKSLSNSELLAILINTGRHGFSSLDIANELLISFNGLKELKHLSINDLTTIKGIGLYKAVILKAAFELGERMYARDFNEKIKITSPSDVSNIMMSKMKDLTQEHFVVLLLNSKNIVIKEETIYKGTLNSSVIHPREVFKAAIRASSNAIIVLHNHPSGDVTPSKEDIETTIRLKECGELLGIQVLDHIIIGDQKYASLVEEGYFDLRN.

Residues 102–224 (KITSPSDVSN…YASLVEEGYF (123 aa)) enclose the MPN domain. Zn(2+) is bound by residues histidine 173, histidine 175, and aspartate 186. The JAMM motif signature appears at 173 to 186 (HNHPSGDVTPSKED).

This sequence belongs to the UPF0758 family.

The chain is UPF0758 protein SH1266 from Staphylococcus haemolyticus (strain JCSC1435).